We begin with the raw amino-acid sequence, 354 residues long: Uroporphyrinogen decarboxylase (354 aa).

Substrate-binding positions include 27-31 (RQAGR), D77, Y154, S209, and H327.

Belongs to the uroporphyrinogen decarboxylase family. As to quaternary structure, homodimer.

Its subcellular location is the cytoplasm. The enzyme catalyses uroporphyrinogen III + 4 H(+) = coproporphyrinogen III + 4 CO2. The protein operates within porphyrin-containing compound metabolism; protoporphyrin-IX biosynthesis; coproporphyrinogen-III from 5-aminolevulinate: step 4/4. Catalyzes the decarboxylation of four acetate groups of uroporphyrinogen-III to yield coproporphyrinogen-III. This Pseudomonas syringae pv. syringae (strain B728a) protein is Uroporphyrinogen decarboxylase.